We begin with the raw amino-acid sequence, 380 residues long: 1-deoxy-D-xylulose 5-phosphate reductoisomerase (380 aa).

NADPH contacts are provided by T10, G11, S12, I13, G36, R37, N38, and N120. Residue K121 coordinates 1-deoxy-D-xylulose 5-phosphate. E122 is an NADPH binding site. Residue D146 coordinates Mn(2+). 4 residues coordinate 1-deoxy-D-xylulose 5-phosphate: S147, E148, S172, and H195. E148 serves as a coordination point for Mn(2+). G201 serves as a coordination point for NADPH. 1-deoxy-D-xylulose 5-phosphate is bound by residues S208, N213, K214, and E217. E217 contacts Mn(2+).

It belongs to the DXR family. It depends on Mg(2+) as a cofactor. Requires Mn(2+) as cofactor.

It carries out the reaction 2-C-methyl-D-erythritol 4-phosphate + NADP(+) = 1-deoxy-D-xylulose 5-phosphate + NADPH + H(+). It participates in isoprenoid biosynthesis; isopentenyl diphosphate biosynthesis via DXP pathway; isopentenyl diphosphate from 1-deoxy-D-xylulose 5-phosphate: step 1/6. In terms of biological role, catalyzes the NADPH-dependent rearrangement and reduction of 1-deoxy-D-xylulose-5-phosphate (DXP) to 2-C-methyl-D-erythritol 4-phosphate (MEP). This is 1-deoxy-D-xylulose 5-phosphate reductoisomerase from Listeria monocytogenes serotype 4b (strain F2365).